A 347-amino-acid polypeptide reads, in one-letter code: Peroxidase C2 (347 aa).

A signal peptide spans 1–24 (MHSSSSLIKLGFLLLLLNVSLSHA). 4 disulfides stabilise this stretch: Cys-35–Cys-115, Cys-68–Cys-73, Cys-121–Cys-325, and Cys-201–Cys-233. Catalysis depends on His-66, which acts as the Proton acceptor. Residues Asp-67, Val-70, Gly-72, Asp-74, and Ser-76 each coordinate Ca(2+). Residue Asn-81 is glycosylated (N-linked (GlcNAc...) asparagine). Substrate is bound at residue Pro-163. His-194 serves as a coordination point for heme b. Ca(2+) is bound at residue Thr-195. 2 N-linked (GlcNAc...) asparagine glycosylation sites follow: Asn-210 and Asn-238. The Ca(2+) site is built by Asp-246, Thr-249, and Asp-254.

The protein belongs to the peroxidase family. Classical plant (class III) peroxidase subfamily. The cofactor is Ca(2+). Heme b serves as cofactor.

It localises to the secreted. The protein resides in the vacuole. It carries out the reaction 2 a phenolic donor + H2O2 = 2 a phenolic radical donor + 2 H2O. In terms of biological role, removal of H(2)O(2), oxidation of toxic reductants, biosynthesis and degradation of lignin, suberization, auxin catabolism, response to environmental stresses such as wounding, pathogen attack and oxidative stress. These functions might be dependent on each isozyme/isoform in each plant tissue. In Armoracia rusticana (Horseradish), this protein is Peroxidase C2 (PRXC2).